Consider the following 248-residue polypeptide: Probable transcriptional regulatory protein FTN_1028 (248 aa).

The protein belongs to the TACO1 family.

The protein resides in the cytoplasm. The chain is Probable transcriptional regulatory protein FTN_1028 from Francisella tularensis subsp. novicida (strain U112).